Reading from the N-terminus, the 330-residue chain is Quinone oxidoreductase (330 aa).

A2 bears the N-acetylalanine mark. The residue at position 23 (K23) is an N6-acetyllysine. Residues Y53, S158–V161, G181, H200, N229, V246–K249, and V269–L271 contribute to the NADP(+) site. S248 carries the phosphoserine modification.

This sequence belongs to the zinc-containing alcohol dehydrogenase family. Quinone oxidoreductase subfamily. In terms of assembly, homotetramer.

It localises to the cytoplasm. It carries out the reaction 2 a quinone + NADPH + H(+) = 2 a 1,4-benzosemiquinone + NADP(+). Its function is as follows. Does not have alcohol dehydrogenase activity. Binds NADP and acts through a one-electron transfer process. Orthoquinones, such as 1,2-naphthoquinone or 9,10-phenanthrenequinone, are the best substrates (in vitro). May act in the detoxification of xenobiotics. Interacts with (AU)-rich elements (ARE) in the 3'-UTR of target mRNA species and enhances their stability. NADPH binding interferes with mRNA binding. This Lama guanicoe (Guanaco) protein is Quinone oxidoreductase (CRYZ).